Reading from the N-terminus, the 588-residue chain is Phosphoinositide phosphatase SAC8 (588 aa).

Residues 37-56 (FSVNRRDGNIKPLDENASSG) form a disordered region. Residues 40–50 (NRRDGNIKPLD) are compositionally biased toward basic and acidic residues. Residues 129 to 455 (LQALETTPGL…GDEVSLQYAG (327 aa)) form the SAC domain. The Phosphatase catalytic core signature appears at 390–401 (RSNCIDCLDRTN). 2 helical membrane-spanning segments follow: residues 524–544 (SFLPVASALLIGGVTVTSFTI) and 555–575 (LASALWAGVTAGVVAMIKANG).

As to expression, ubiquitous with a higher level of expression in young seedlings than in other tissues.

The protein localises to the endoplasmic reticulum membrane. Its function is as follows. Phosphoinositide phosphatase that hydrolyzes PtdIns(3)P and PtdIns(4)P. The sequence is that of Phosphoinositide phosphatase SAC8 (SAC8) from Arabidopsis thaliana (Mouse-ear cress).